The primary structure comprises 466 residues: Rho GTPase-activating protein 1 (466 aa).

Disordered regions lie at residues 1–31 (MTEV…SLSY) and 65–84 (EEQD…DDGG). The segment covering 8 to 31 (PSSPSASHSSSSSSSSPSPSSLSY) has biased composition (low complexity). Over residues 65–74 (EEQDLRRRSS) the composition is skewed to basic and acidic residues. The 14-residue stretch at 117 to 130 (IGWPTNVRHVAHVT) folds into the CRIB domain. The Rho-GAP domain occupies 162-342 (VSTESMQLSY…TLIEKTLRER (181 aa)). Residues 354–402 (PLEPSDESGHQSPSQSLAFNTSEQSEETQSDNIENAENQSSSSEISDEL) form a disordered region. Composition is skewed to polar residues over residues 363–376 (HQSP…NTSE) and 383–397 (SDNI…SSSE).

Acts as a GTPase activator for the Rac-type GTPase by converting it to an inactive GDP-bound state. This chain is Rho GTPase-activating protein 1 (ROPGAP1), found in Arabidopsis thaliana (Mouse-ear cress).